The following is an 835-amino-acid chain: Leucine--tRNA ligase (835 aa).

The 'HIGH' region motif lies at proline 36–histidine 46. Residues lysine 602–serine 606 carry the 'KMSKS' region motif. Lysine 605 is a binding site for ATP.

Belongs to the class-I aminoacyl-tRNA synthetase family.

Its subcellular location is the cytoplasm. It carries out the reaction tRNA(Leu) + L-leucine + ATP = L-leucyl-tRNA(Leu) + AMP + diphosphate. The polypeptide is Leucine--tRNA ligase (Rickettsia massiliae (strain Mtu5)).